A 2629-amino-acid polypeptide reads, in one-letter code: Protein DOP1 homolog (2629 aa).

Disordered stretches follow at residues 561–584, 605–652, 688–710, 1278–1340, 1371–1395, 1435–1471, and 1766–1785; these read NKGV…SRLN, SASN…TPRS, AGNV…PQFY, MDES…SSSA, TYRL…QTEH, ISKT…ATDS, and RQDT…SPTR. Polar residues-rich tracts occupy residues 605 to 615 and 636 to 647; these read SASNQSVGRQS and ASDTGQQSSSDL. Over residues 1307–1320 the composition is skewed to acidic residues; it reads DITDNSDSSDFESD. Over residues 1321-1333 the composition is skewed to basic and acidic residues; sequence SELRETSLEKEDS. 2 stretches are compositionally biased toward polar residues: residues 1381–1391 and 1435–1450; these read GENSLNSVATD and ISKT…SCSQ.

Belongs to the DOP1 family.

It is found in the golgi apparatus membrane. Its function is as follows. May be involved in protein traffic between late Golgi and early endosomes. The chain is Protein DOP1 homolog from Drosophila pseudoobscura pseudoobscura (Fruit fly).